The sequence spans 440 residues: Gamma-aminobutyric acid receptor subunit pi (440 aa).

Residues 1–23 form the signal peptide; sequence MKRSLHLTFVCLSLFSARMCVQG. At 24-241 the chain is on the extracellular side; the sequence is NQFNIEVSRS…LVLQFELQRN (218 aa). Asn-43, Asn-102, and Asn-145 each carry an N-linked (GlcNAc...) asparagine glycan. Cys-160 and Cys-174 are oxidised to a cystine. Asn-196 and Asn-228 each carry an N-linked (GlcNAc...) asparagine glycan. Residues 242-262 traverse the membrane as a helical segment; sequence VLYFILETYVPSTFLVVLSWV. The Cytoplasmic segment spans residues 263-270; the sequence is SFWISLDS. The helical transmembrane segment at 271 to 290 threads the bilayer; the sequence is VPARTCIGVTTVLSMTTLMI. Residues 291–301 lie on the Extracellular side of the membrane; it reads GSRTSLPNTNC. The chain crosses the membrane as a helical span at residues 302 to 322; it reads FIKAIDVYLGICFSFVFGALL. The Cytoplasmic portion of the chain corresponds to 323–419; that stretch reads EYAVAHYSSL…NPSNVDRYSK (97 aa). Residues 420–440 form a helical membrane-spanning segment; that stretch reads LLFPLIFMLANVFYWAYYMYF.

It belongs to the ligand-gated ion channel (TC 1.A.9) family. Gamma-aminobutyric acid receptor (TC 1.A.9.5) subfamily. GABRP sub-subfamily. Heteropentamer, formed by a combination of alpha (GABRA1-6), beta (GABRB1-3), gamma (GABRG1-3), delta (GABRD), epsilon (GABRE), rho (GABRR1-3), pi (GABRP) and theta (GABRQ) chains, each subunit exhibiting distinct physiological and pharmacological properties.

Its subcellular location is the cell membrane. The protein resides in the apical cell membrane. The enzyme catalyses chloride(in) = chloride(out). In terms of biological role, pi subunit of the heteropentameric ligand-gated chloride channel gated by gamma-aminobutyric acid (GABA). GABA-gated chloride channels, also named GABA(A) receptors (GABAAR), consist of five subunits arranged around a central pore and contain GABA active binding site(s) located at the alpha and beta subunit interfaces. When activated by GABA, GABAARs selectively allow the flow of chloride anions across the cell membrane down their electrochemical gradient. Pi-containing GABAARs are mostly located in peripheral tissues. In the uterus, pi subunits modulate uterus contraction by altering the sensitivity of GABAARs to pregnanolone. In the lungs, pi-containing GABAARs contribute to pulmonary fluid transport via luminal secretion of chloride. The chain is Gamma-aminobutyric acid receptor subunit pi (GABRP) from Bos taurus (Bovine).